A 310-amino-acid chain; its full sequence is Adenylyl-sulfate kinase 4, chloroplastic (310 aa).

A chloroplast-targeting transit peptide spans 1-75 (MDVAAMARCV…MAKDESISSR (75 aa)). 116 to 124 (GLSGSGKSS) lines the ATP pocket. Substrate-binding positions include aspartate 146, arginine 149, arginine 163, asparagine 166, 189–190 (IS), and glycine 239. The active-site Phosphoserine intermediate is serine 190.

It belongs to the APS kinase family. In terms of assembly, homodimer; disulfide-linked. Expressed in root vasculature, root tips, leaf epidermal and guard cells, pollen grains and radicle of immature seeds.

It localises to the plastid. The protein localises to the chloroplast. It catalyses the reaction adenosine 5'-phosphosulfate + ATP = 3'-phosphoadenylyl sulfate + ADP + H(+). The protein operates within sulfur metabolism; hydrogen sulfide biosynthesis; sulfite from sulfate: step 2/3. Functionally, catalyzes the phosphorylation of adenosine 5'-phosphosulfate to 3'-phosphoadenylyl sulfate, which is the activated sulfate form for sulfation reactions. Essential for plant reproduction and viability. The polypeptide is Adenylyl-sulfate kinase 4, chloroplastic (APK4) (Arabidopsis thaliana (Mouse-ear cress)).